Reading from the N-terminus, the 493-residue chain is EGF-containing fibulin-like extracellular matrix protein 1 (493 aa).

The N-terminal stretch at 1–17 is a signal peptide; sequence MLKALFLTMLTLALVKS. The EGF-like 1; atypical domain occupies 26-71; it reads YTQCTDGYEWDPVRQQCKDIDECDIVPDACKGGMKCVNHYGGYLCL. In terms of domain architecture, EGF-like 2; calcium-binding spans 173–213; sequence DIDECTAGTHNCRADQVCINLRGSFACQCPPGYQKRGEQCV. 15 cysteine pairs are disulfide-bonded: cysteine 177/cysteine 190, cysteine 184/cysteine 199, cysteine 201/cysteine 212, cysteine 218/cysteine 228, cysteine 224/cysteine 237, cysteine 239/cysteine 252, cysteine 258/cysteine 268, cysteine 264/cysteine 277, cysteine 279/cysteine 292, cysteine 298/cysteine 309, cysteine 305/cysteine 318, cysteine 320/cysteine 332, cysteine 338/cysteine 350, cysteine 344/cysteine 359, and cysteine 365/cysteine 377. Positions 214–253 constitute an EGF-like 3; calcium-binding domain; it reads DIDECTIPPYCHQRCVNTPGSFYCQCSPGFQLAANNYTCV. Asparagine 249 carries an N-linked (GlcNAc...) asparagine glycan. Residues 254–293 form the EGF-like 4; calcium-binding domain; that stretch reads DINECDASNQCAQQCYNILGSFICQCNQGYELSSDRLNCE. Residues 259-493 form a mediates interaction with TIMP3 region; the sequence is DASNQCAQQC…LTIIVGPFSF (235 aa). In terms of domain architecture, EGF-like 5; calcium-binding spans 294 to 333; the sequence is DIDECRTSSYLCQYQCVNEPGKFSCMCPQGYQVVRSRTCQ. The region spanning 334–378 is the EGF-like 6; calcium-binding domain; sequence DINECETTNECREDEMCWNYHGGFRCYPRNPCQDPYILTPENRCV.

The protein belongs to the fibulin family. As to quaternary structure, interacts with ECM1. Interacts with TIMP3.

The protein resides in the secreted. The protein localises to the extracellular space. It localises to the extracellular matrix. Binds EGFR, the EGF receptor, inducing EGFR autophosphorylation and the activation of downstream signaling pathways. May play a role in cell adhesion and migration. May function as a negative regulator of chondrocyte differentiation. In the olfactory epithelium, it may regulate glial cell migration, differentiation and the ability of glial cells to support neuronal neurite outgrowth. The protein is EGF-containing fibulin-like extracellular matrix protein 1 (EFEMP1) of Macaca fascicularis (Crab-eating macaque).